The chain runs to 243 residues: MGPREPFVVFPAIDLKGGRCVRLRQGDFGRERVYDADPVGRAREWERRGARALHVVDLDGAREGRPVQLALIREIARAAGVPLQVGGGIRTLEDVRAARRAGAARVVVGTAAVADRDFRLRALEELGADLVVAVDAREGVVATHGWQRQSGVGAAELAGELAAEGVRAVLFTDISRDGTGEGAALERTAEVAGIIPTIASGGVRGAGDIRALARTPGVVGAVVGTALYEGQATLEELLAAAGG.

The active-site Proton acceptor is D14. The active-site Proton donor is D135.

The protein belongs to the HisA/HisF family.

It is found in the cytoplasm. It carries out the reaction 1-(5-phospho-beta-D-ribosyl)-5-[(5-phospho-beta-D-ribosylamino)methylideneamino]imidazole-4-carboxamide = 5-[(5-phospho-1-deoxy-D-ribulos-1-ylimino)methylamino]-1-(5-phospho-beta-D-ribosyl)imidazole-4-carboxamide. It participates in amino-acid biosynthesis; L-histidine biosynthesis; L-histidine from 5-phospho-alpha-D-ribose 1-diphosphate: step 4/9. This chain is 1-(5-phosphoribosyl)-5-[(5-phosphoribosylamino)methylideneamino] imidazole-4-carboxamide isomerase, found in Rubrobacter xylanophilus (strain DSM 9941 / JCM 11954 / NBRC 16129 / PRD-1).